A 283-amino-acid polypeptide reads, in one-letter code: MFDKTRLPYVALDVICVLLAGLPFAILTSRHTPFQRGIFCNDDSIKYPYKEDTIPYALLGGIVIPFCIIVMSIGESLSVYFNVLHSNSFVGNPYIATIYKAVGAFLFGVSASQSLTDIAKYTIGSLRPHFLAICNPDWSKINCSDGYIEDYICQGNEEKVKEGRLSFYSGHSSFSMYCMLFVALYLQARMKGDWARLLRPMLQFGLIAFSIYVGLSRVSDYKHHWSDVTVGLIQGAAMAILVALYVSDFFKDTHSYKERKEEDPHTTLHETASSRNYSTNHEP.

Residues 1 to 6 (MFDKTR) are Cytoplasmic-facing. Residues 5 to 7 (TRL) carry the PDZ-binding; involved in localization to the apical cell membrane motif. Residues 7–27 (LPYVALDVICVLLAGLPFAIL) form a helical membrane-spanning segment. Residues 28–53 (TSRHTPFQRGIFCNDDSIKYPYKEDT) are Extracellular-facing. A helical membrane pass occupies residues 54–74 (IPYALLGGIVIPFCIIVMSIG). Over 75–88 (ESLSVYFNVLHSNS) the chain is Cytoplasmic. The helical transmembrane segment at 89–109 (FVGNPYIATIYKAVGAFLFGV) threads the bilayer. At 110 to 164 (SASQSLTDIAKYTIGSLRPHFLAICNPDWSKINCSDGYIEDYICQGNEEKVKEGR) the chain is on the extracellular side. Residues 120–128 (KYTIGSLRP) are phosphatase sequence motif I. N-linked (GlcNAc...) asparagine glycosylation occurs at asparagine 142. Residues 165-185 (LSFYSGHSSFSMYCMLFVALY) traverse the membrane as a helical segment. Residues 168–171 (YSGH) form a phosphatase sequence motif II region. Histidine 171 acts as the Proton donors in catalysis. Residues 186–199 (LQARMKGDWARLLR) lie on the Cytoplasmic side of the membrane. A helical transmembrane segment spans residues 200–220 (PMLQFGLIAFSIYVGLSRVSD). Residues 216–227 (SRVSDYKHHWSD) form a phosphatase sequence motif III region. Residues 221–229 (YKHHWSDVT) are Extracellular-facing. Histidine 223 functions as the Nucleophile in the catalytic mechanism. Residues 230-250 (VGLIQGAAMAILVALYVSDFF) form a helical membrane-spanning segment. At 251-283 (KDTHSYKERKEEDPHTTLHETASSRNYSTNHEP) the chain is on the cytoplasmic side. The segment at 260-283 (KEEDPHTTLHETASSRNYSTNHEP) is disordered. The span at 269 to 283 (HETASSRNYSTNHEP) shows a compositional bias: polar residues.

This sequence belongs to the PA-phosphatase related phosphoesterase family. As to quaternary structure, forms functional homodimers and homooligomers that are not required for substrate recognition and catalytic activity. Can also form heterooligomers with PLPP2 and PLPP3. N-glycosylated. N-linked sugars are of the complex type. N-glycosylation is not required for the phosphatase activity. As to expression, widely expressed. Highly expressed in kidney and lung. Almost undetectable in brain, heart, bone, muscle or spleen.

Its subcellular location is the cell membrane. It localises to the apical cell membrane. The protein resides in the membrane raft. It is found in the membrane. The protein localises to the caveola. The catalysed reaction is a 1,2-diacyl-sn-glycero-3-phosphate + H2O = a 1,2-diacyl-sn-glycerol + phosphate. It carries out the reaction 1,2-dihexadecanoyl-sn-glycero-3-phosphate + H2O = 1,2-dihexadecanoyl-sn-glycerol + phosphate. It catalyses the reaction 1,2-di-(9Z-octadecenoyl)-sn-glycero-3-phosphate + H2O = 1,2-di-(9Z-octadecenoyl)-sn-glycerol + phosphate. The enzyme catalyses a monoacyl-sn-glycero-3-phosphate + H2O = a monoacylglycerol + phosphate. The catalysed reaction is (9Z)-octadecenoyl-sn-glycero-3-phosphate + H2O = (9Z-octadecenoyl)-glycerol + phosphate. It carries out the reaction a 1-acyl-sn-glycero-3-phosphate + H2O = a 1-acyl-sn-glycerol + phosphate. It catalyses the reaction 1-(9Z-octadecenoyl)-sn-glycero-3-phosphate + H2O = 1-(9Z-octadecenoyl)-sn-glycerol + phosphate. The enzyme catalyses a 1,2-diacyl-sn-glycerol 3-diphosphate + H2O = a 1,2-diacyl-sn-glycero-3-phosphate + phosphate + H(+). The catalysed reaction is sphing-4-enine 1-phosphate + H2O = sphing-4-enine + phosphate. It carries out the reaction an N-acylsphing-4-enine 1-phosphate + H2O = an N-acylsphing-4-enine + phosphate. It catalyses the reaction N-(octanoyl)-sphing-4-enine-1-phosphate + H2O = N-octanoylsphing-4-enine + phosphate. The enzyme catalyses N-(9Z-octadecenoyl)-ethanolamine phosphate + H2O = N-(9Z-octadecenoyl) ethanolamine + phosphate. The catalysed reaction is 1-hexadecanoyl-2-(9Z-octadecenoyl)-sn-glycero-3-phosphate + H2O = 1-hexadecanoyl-2-(9Z-octadecenoyl)-sn-glycerol + phosphate. It functions in the pathway lipid metabolism; phospholipid metabolism. With respect to regulation, magnesium-independent phospholipid phosphatase. Insensitive to N-ethylmaleimide. In terms of biological role, magnesium-independent phospholipid phosphatase of the plasma membrane that catalyzes the dephosphorylation of a variety of glycerolipid and sphingolipid phosphate esters including phosphatidate/PA, lysophosphatidate/LPA, diacylglycerol pyrophosphate/DGPP, sphingosine 1-phosphate/S1P and ceramide 1-phosphate/C1P. Also acts on N-oleoyl ethanolamine phosphate/N-(9Z-octadecenoyl)-ethanolamine phosphate, a potential physiological compound. Through its extracellular phosphatase activity allows both the hydrolysis and the cellular uptake of these bioactive lipid mediators from the milieu, regulating signal transduction in different cellular processes. It is for instance essential for the extracellular hydrolysis of S1P and subsequent conversion into intracellular S1P. Involved in the regulation of inflammation, platelets activation, cell proliferation and migration among other processes. May also have an intracellular activity to regulate phospholipid-mediated signaling pathways. The polypeptide is Phospholipid phosphatase 1 (Mus musculus (Mouse)).